The chain runs to 359 residues: MQFIDQAEIQVRAGKGGDGIVAFRREKYVPAGGPAGGNGGPGGSVILRVNPQLQTLLDFHYTQLFKAEDGQRGGPKNMTGAAGNDRIIEVPAGTMVYDTETGALLGDLTDANQTLLVAKGGKGGLGNKFFLSNHNRAPDYALPGLEGEERSLRLELKLLAEVGIIGLPNAGKSTLISVLSAARPKIADYPFTTLVPNLGVVRPPNGDGVVFADIPGLIAGAHQGIGLGHDFLRHIERTRLLIHLIDSTAEDPLRDYVTIQTELEAYGHGLSDRPQIVVLNKIDALLPEDLTDLQARLQSEIHTPVFAISAIARTGLDALLHQIWQELEQLDLATEDASYPGSGAIEGLTPGLLSRGVVE.

Residues 1 to 159 enclose the Obg domain; the sequence is MQFIDQAEIQ…RSLRLELKLL (159 aa). The OBG-type G domain maps to 160–328; that stretch reads AEVGIIGLPN…LLHQIWQELE (169 aa). Residues 166 to 173, 191 to 195, 213 to 216, 280 to 283, and 309 to 311 each bind GTP; these read GLPNAGKS, FTTLV, DIPG, NKID, and SAI. Residues S173 and T193 each contribute to the Mg(2+) site.

It belongs to the TRAFAC class OBG-HflX-like GTPase superfamily. OBG GTPase family. As to quaternary structure, monomer. Mg(2+) serves as cofactor.

It is found in the cytoplasm. In terms of biological role, an essential GTPase which binds GTP, GDP and possibly (p)ppGpp with moderate affinity, with high nucleotide exchange rates and a fairly low GTP hydrolysis rate. Plays a role in control of the cell cycle, stress response, ribosome biogenesis and in those bacteria that undergo differentiation, in morphogenesis control. In Cyanothece sp. (strain PCC 7425 / ATCC 29141), this protein is GTPase Obg.